The sequence spans 110 residues: Putative zinc finger protein ORF110 (110 aa).

A C2H2-type zinc finger spans residues 3-26 (YVCTACKLKFHTFEEFKIHVHLFH).

The sequence is that of Putative zinc finger protein ORF110 from Acidianus filamentous virus 1 (isolate United States/Yellowstone) (AFV-1).